The sequence spans 465 residues: Methylenetetrahydrofolate--tRNA-(uracil-5-)-methyltransferase TrmFO (465 aa).

Residue 10-15 (GAGLAG) participates in FAD binding.

Belongs to the MnmG family. TrmFO subfamily. It depends on FAD as a cofactor.

The protein localises to the cytoplasm. The catalysed reaction is uridine(54) in tRNA + (6R)-5,10-methylene-5,6,7,8-tetrahydrofolate + NADH + H(+) = 5-methyluridine(54) in tRNA + (6S)-5,6,7,8-tetrahydrofolate + NAD(+). The enzyme catalyses uridine(54) in tRNA + (6R)-5,10-methylene-5,6,7,8-tetrahydrofolate + NADPH + H(+) = 5-methyluridine(54) in tRNA + (6S)-5,6,7,8-tetrahydrofolate + NADP(+). Catalyzes the folate-dependent formation of 5-methyl-uridine at position 54 (M-5-U54) in all tRNAs. This is Methylenetetrahydrofolate--tRNA-(uracil-5-)-methyltransferase TrmFO from Deinococcus radiodurans (strain ATCC 13939 / DSM 20539 / JCM 16871 / CCUG 27074 / LMG 4051 / NBRC 15346 / NCIMB 9279 / VKM B-1422 / R1).